A 213-amino-acid chain; its full sequence is Riboflavin synthase (213 aa).

Lumazine-binding repeat units lie at residues 1–97 (MFTG…IGGH) and 98–195 (LMSG…VDTV). Residues 4-6 (GIV), 48-50 (CLT), 62-67 (DLMKET), 101-103 (GHI), Lys137, 146-148 (SLT), and 160-165 (HLIPET) each bind 2,4-dihydroxypteridine.

Homotrimer. Unlike in B.subtilis, does not interact with 6,7-dimethyl-8-ribityllumazine synthase.

It catalyses the reaction 2 6,7-dimethyl-8-(1-D-ribityl)lumazine + H(+) = 5-amino-6-(D-ribitylamino)uracil + riboflavin. Its pathway is cofactor biosynthesis; riboflavin biosynthesis; riboflavin from 2-hydroxy-3-oxobutyl phosphate and 5-amino-6-(D-ribitylamino)uracil: step 2/2. Functionally, catalyzes the dismutation of two molecules of 6,7-dimethyl-8-ribityllumazine, resulting in the formation of riboflavin and 5-amino-6-(D-ribitylamino)uracil. The polypeptide is Riboflavin synthase (ribC) (Escherichia coli (strain K12)).